Here is a 404-residue protein sequence, read N- to C-terminus: Tryptophan synthase beta chain (404 aa).

Lys98 carries the N6-(pyridoxal phosphate)lysine modification.

This sequence belongs to the TrpB family. In terms of assembly, tetramer of two alpha and two beta chains. Pyridoxal 5'-phosphate serves as cofactor.

It carries out the reaction (1S,2R)-1-C-(indol-3-yl)glycerol 3-phosphate + L-serine = D-glyceraldehyde 3-phosphate + L-tryptophan + H2O. The protein operates within amino-acid biosynthesis; L-tryptophan biosynthesis; L-tryptophan from chorismate: step 5/5. Its function is as follows. The beta subunit is responsible for the synthesis of L-tryptophan from indole and L-serine. This Rhodopseudomonas palustris (strain BisA53) protein is Tryptophan synthase beta chain.